Consider the following 477-residue polypeptide: Alkaline phosphatase (477 aa).

D44 contributes to the Mg(2+) binding site. D44 contacts Zn(2+). The Phosphoserine intermediate role is filled by S94. An N-linked (GlcNAc...) asparagine glycan is attached at N124. Residues H155 and T157 each contribute to the Mg(2+) site. A disulfide bridge connects residues C165 and C185. An N-linked (GlcNAc...) asparagine glycan is attached at N214. E315 is a binding site for Mg(2+). Zn(2+)-binding residues include D320, H324, D361, and H362. N-linked (GlcNAc...) asparagine glycosylation is present at N413. A Zn(2+)-binding site is contributed by H437.

As to quaternary structure, homodimer. It depends on Mg(2+) as a cofactor. The cofactor is Zn(2+).

The protein localises to the cell membrane. The catalysed reaction is a phosphate monoester + H2O = an alcohol + phosphate. This chain is Alkaline phosphatase, found in Gadus morhua (Atlantic cod).